The chain runs to 367 residues: B2 bradykinin receptor (367 aa).

Topologically, residues 1–36 are extracellular; that stretch reads MLNITSQVLAPALNGSVSQSSGCPNTEWSGWLNVIQ. N-linked (GlcNAc...) asparagine glycosylation is found at N3 and N14. The chain crosses the membrane as a helical span at residues 37–60; the sequence is APFLWVLFVLATLENLFVLSVFCL. The Cytoplasmic segment spans residues 61 to 69; the sequence is HKSSCTVAE. A helical membrane pass occupies residues 70 to 94; it reads VYLGNLAAADLILACGLPFWAVTIA. The Extracellular portion of the chain corresponds to 95–107; that stretch reads NHFDWLFGEALCR. C106 and C187 form a disulfide bridge. Residues 108-129 traverse the membrane as a helical segment; that stretch reads VVNTMIYMNLYSSICFLMLVSI. At 130 to 151 the chain is on the cytoplasmic side; that stretch reads DRYLALVKTMSIGRMRRVRWAK. Phosphotyrosine is present on Y132. The helical transmembrane segment at 152-174 threads the bilayer; the sequence is LYSLVIWGCTLLLSSPMLVFRTM. The Extracellular segment spans residues 175–197; the sequence is KDYRDEGYNVTACIIDYPSRSWE. N183 carries N-linked (GlcNAc...) asparagine glycosylation. Residues 198–224 traverse the membrane as a helical segment; that stretch reads VFTNVLLNLVGFLLPLSVITFCTVQIL. The Cytoplasmic segment spans residues 225–243; that stretch reads QVLRNNEMQKFKEIQTERR. A helical membrane pass occupies residues 244–268; it reads ATVLVLAVLLLFVVCWLPFQVSTFL. At 269–287 the chain is on the extracellular side; that stretch reads DTLLKLGVLSSCWDEHVID. The chain crosses the membrane as a helical span at residues 288 to 311; it reads VITQVGSFMGYSNSCLNPLVYVIV. Topologically, residues 312-367 are cytoplasmic; it reads GKRFRKKSREVYRAACPKAGCVLEPVQAESSMGTLRTSISVERQIHKLPEWTRSSQ. At Y323 the chain carries Phosphotyrosine. C327 carries the S-palmitoyl cysteine lipid modification. S342 bears the Phosphoserine mark. T345 is modified (phosphothreonine). Phosphoserine; by GRK6 is present on residues S349 and S351.

This sequence belongs to the G-protein coupled receptor 1 family. Bradykinin receptor subfamily. BDKRB2 sub-subfamily. As to quaternary structure, forms a complex with PECAM1 and GNAQ. Interacts with PECAM1.

The protein localises to the cell membrane. Functionally, receptor for bradykinin. It is associated with G proteins that activate a phosphatidylinositol-calcium second messenger system. In Oryctolagus cuniculus (Rabbit), this protein is B2 bradykinin receptor (BDKRB2).